Reading from the N-terminus, the 515-residue chain is Alpha-1B adrenergic receptor (515 aa).

Residues Met1–Ala45 lie on the Extracellular side of the membrane. N-linked (GlcNAc...) asparagine glycans are attached at residues Asn10, Asn24, and Asn34. A helical transmembrane segment spans residues Ile46–Val70. At Ala71–Phe83 the chain is on the cytoplasmic side. The helical transmembrane segment at Ile84–Leu105 threads the bilayer. Over Glu106–Arg115 the chain is Extracellular. A helical membrane pass occupies residues Ile116–Ile141. Residues Cys118 and Cys195 are joined by a disulfide bond. Over Asp142 to Lys161 the chain is Cytoplasmic. Residues Ala162–Leu182 form a helical membrane-spanning segment. Residues Gly183–Pro201 are Extracellular-facing. A helical membrane pass occupies residues Phe202–Cys224. The Cytoplasmic segment spans residues Arg225 to Thr295. Thr264 carries the phosphothreonine modification. Residues Leu296–Leu319 form a helical membrane-spanning segment. The Extracellular portion of the chain corresponds to Phe320 to Pro326. A helical membrane pass occupies residues Asp327 to Ser351. At Ser352 to Phe515 the chain is on the cytoplasmic side. Residue Cys365 is the site of S-palmitoyl cysteine attachment. The short motif at Arg368–Arg378 is the Nuclear localization signal element. Disordered stretches follow at residues Gly392–Gly430 and Leu474–Phe515. Polar residues-rich tracts occupy residues Ser410–Pro424 and Gly484–Ala498.

This sequence belongs to the G-protein coupled receptor 1 family. Adrenergic receptor subfamily. ADRA1B sub-subfamily. In terms of assembly, homo- and heterooligomer. Heterooligomerizes with ADRA1B homooligomers in cardiac myocytes. Interacts with CAVIN4.

It localises to the nucleus membrane. The protein localises to the cell membrane. It is found in the cytoplasm. The protein resides in the membrane. Its subcellular location is the caveola. In terms of biological role, this alpha-adrenergic receptor mediates its action by association with G proteins that activate a phosphatidylinositol-calcium second messenger system. Its effect is mediated by G(q) and G(11) proteins. Nuclear ADRA1A-ADRA1B heterooligomers regulate phenylephrine (PE)-stimulated ERK signaling in cardiac myocytes. This Rattus norvegicus (Rat) protein is Alpha-1B adrenergic receptor (Adra1b).